The following is a 431-amino-acid chain: Serine--tRNA ligase (431 aa).

An L-serine-binding site is contributed by 238–240 (TSE). An ATP-binding site is contributed by 269 to 271 (RSE). Glutamate 292 lines the L-serine pocket. 356–359 (EISS) contacts ATP. Serine 391 serves as a coordination point for L-serine.

The protein belongs to the class-II aminoacyl-tRNA synthetase family. Type-1 seryl-tRNA synthetase subfamily. As to quaternary structure, homodimer. The tRNA molecule binds across the dimer.

It is found in the cytoplasm. The catalysed reaction is tRNA(Ser) + L-serine + ATP = L-seryl-tRNA(Ser) + AMP + diphosphate + H(+). It carries out the reaction tRNA(Sec) + L-serine + ATP = L-seryl-tRNA(Sec) + AMP + diphosphate + H(+). Its pathway is aminoacyl-tRNA biosynthesis; selenocysteinyl-tRNA(Sec) biosynthesis; L-seryl-tRNA(Sec) from L-serine and tRNA(Sec): step 1/1. Its function is as follows. Catalyzes the attachment of serine to tRNA(Ser). Is also able to aminoacylate tRNA(Sec) with serine, to form the misacylated tRNA L-seryl-tRNA(Sec), which will be further converted into selenocysteinyl-tRNA(Sec). This chain is Serine--tRNA ligase, found in Leptothrix cholodnii (strain ATCC 51168 / LMG 8142 / SP-6) (Leptothrix discophora (strain SP-6)).